The primary structure comprises 471 residues: Anthocyanidin 3-O-glucosyltransferase (471 aa).

The Proton acceptor role is filled by His-24. His-24 contributes to the an anthocyanidin binding site. Catalysis depends on Asp-130, which acts as the Charge relay. Thr-152 is a binding site for UDP-alpha-D-glucose. His-161 contacts an anthocyanidin. UDP-alpha-D-glucose-binding residues include Ala-352, Gln-354, His-369, Trp-372, Ser-374, and Glu-377. Position 392 (Gly-392) interacts with an anthocyanidin. UDP-alpha-D-glucose-binding residues include Asp-393 and Gln-394.

The protein belongs to the UDP-glycosyltransferase family.

It carries out the reaction an anthocyanidin + UDP-alpha-D-glucose + H(+) = an anthocyanidin 3-O-beta-D-glucoside + UDP. It participates in pigment biosynthesis; anthocyanin biosynthesis. Its function is as follows. In the presence of other necessary color factors, this glycosylation reaction allows the accumulation of anthocyanin pigments. This Zea mays (Maize) protein is Anthocyanidin 3-O-glucosyltransferase (BZ1).